The sequence spans 109 residues: UPF0060 membrane protein PA3275 (109 aa).

Transmembrane regions (helical) follow at residues 5–25, 27–47, 59–79, and 84–104; these read FWFVLAAFCEIAGCYAFYLWL, LGKSALWVLPGLLSLTLFALL, AYAAYGGIYVAASLFWLAFVE, and LWSDWLGVALCVVGASVVLFG.

It belongs to the UPF0060 family.

It is found in the cell inner membrane. The sequence is that of UPF0060 membrane protein PA3275 from Pseudomonas aeruginosa (strain ATCC 15692 / DSM 22644 / CIP 104116 / JCM 14847 / LMG 12228 / 1C / PRS 101 / PAO1).